We begin with the raw amino-acid sequence, 591 residues long: V-type ATP synthase alpha chain (591 aa).

Gly233–Thr240 contributes to the ATP binding site.

This sequence belongs to the ATPase alpha/beta chains family.

The enzyme catalyses ATP + H2O + 4 H(+)(in) = ADP + phosphate + 5 H(+)(out). Its function is as follows. Produces ATP from ADP in the presence of a proton gradient across the membrane. The V-type alpha chain is a catalytic subunit. This chain is V-type ATP synthase alpha chain, found in Streptococcus pyogenes serotype M49 (strain NZ131).